A 205-amino-acid chain; its full sequence is Protein GrpE (205 aa).

A disordered region spans residues 1–40 (MSRKLHEEELTPEGMDAAQNADPAGDPVSENEGALPAAEP).

It belongs to the GrpE family. Homodimer.

The protein resides in the cytoplasm. Its function is as follows. Participates actively in the response to hyperosmotic and heat shock by preventing the aggregation of stress-denatured proteins, in association with DnaK and GrpE. It is the nucleotide exchange factor for DnaK and may function as a thermosensor. Unfolded proteins bind initially to DnaJ; upon interaction with the DnaJ-bound protein, DnaK hydrolyzes its bound ATP, resulting in the formation of a stable complex. GrpE releases ADP from DnaK; ATP binding to DnaK triggers the release of the substrate protein, thus completing the reaction cycle. Several rounds of ATP-dependent interactions between DnaJ, DnaK and GrpE are required for fully efficient folding. The sequence is that of Protein GrpE from Acidobacterium capsulatum (strain ATCC 51196 / DSM 11244 / BCRC 80197 / JCM 7670 / NBRC 15755 / NCIMB 13165 / 161).